The primary structure comprises 715 residues: Fatty acid oxidation complex subunit alpha (715 aa).

The segment at 1–190 is enoyl-CoA hydratase/isomerase; the sequence is MIYEGKAITV…KVGAVDAVVA (190 aa). A substrate-binding site is contributed by aspartate 297. The tract at residues 312–715 is 3-hydroxyacyl-CoA dehydrogenase; it reads RDVKQAAVLG…MAKNGQSFFG (404 aa). NAD(+) is bound by residues methionine 325, aspartate 344, 401–403, lysine 408, and serine 430; that span reads VVE. Residue histidine 451 is the For 3-hydroxyacyl-CoA dehydrogenase activity of the active site. An NAD(+)-binding site is contributed by asparagine 454. Residues asparagine 501 and tyrosine 660 each contribute to the substrate site.

The protein in the N-terminal section; belongs to the enoyl-CoA hydratase/isomerase family. In the C-terminal section; belongs to the 3-hydroxyacyl-CoA dehydrogenase family. As to quaternary structure, heterotetramer of two alpha chains (FadB) and two beta chains (FadA).

The catalysed reaction is a (3S)-3-hydroxyacyl-CoA + NAD(+) = a 3-oxoacyl-CoA + NADH + H(+). It carries out the reaction a (3S)-3-hydroxyacyl-CoA = a (2E)-enoyl-CoA + H2O. The enzyme catalyses a 4-saturated-(3S)-3-hydroxyacyl-CoA = a (3E)-enoyl-CoA + H2O. It catalyses the reaction (3S)-3-hydroxybutanoyl-CoA = (3R)-3-hydroxybutanoyl-CoA. The catalysed reaction is a (3Z)-enoyl-CoA = a 4-saturated (2E)-enoyl-CoA. It carries out the reaction a (3E)-enoyl-CoA = a 4-saturated (2E)-enoyl-CoA. The protein operates within lipid metabolism; fatty acid beta-oxidation. Involved in the aerobic and anaerobic degradation of long-chain fatty acids via beta-oxidation cycle. Catalyzes the formation of 3-oxoacyl-CoA from enoyl-CoA via L-3-hydroxyacyl-CoA. It can also use D-3-hydroxyacyl-CoA and cis-3-enoyl-CoA as substrate. This Pseudomonas fluorescens (strain SBW25) protein is Fatty acid oxidation complex subunit alpha.